A 380-amino-acid polypeptide reads, in one-letter code: Phosphate acyltransferase (380 aa).

The interval 1–23 (MPSPPPTPETATASDRTATPAPG) is disordered.

Belongs to the PlsX family. As to quaternary structure, homodimer. Probably interacts with PlsY.

The protein localises to the cytoplasm. The enzyme catalyses a fatty acyl-[ACP] + phosphate = an acyl phosphate + holo-[ACP]. Its pathway is lipid metabolism; phospholipid metabolism. Its function is as follows. Catalyzes the reversible formation of acyl-phosphate (acyl-PO(4)) from acyl-[acyl-carrier-protein] (acyl-ACP). This enzyme utilizes acyl-ACP as fatty acyl donor, but not acyl-CoA. In Acidiphilium cryptum (strain JF-5), this protein is Phosphate acyltransferase.